The sequence spans 356 residues: Pyruvate dehydrogenase E1 component subunit beta, mitochondrial (356 aa).

A mitochondrion-targeting transit peptide spans 1 to 25 (MLSSILKKIQPSLLVNFRIITRTYA). Glu-85 serves as a coordination point for thiamine diphosphate. The K(+) site is built by Ile-138, Ala-186, Ile-187, Asp-189, and Asn-191.

Tetramer of 2 alpha and 2 beta subunits. Requires thiamine diphosphate as cofactor.

It localises to the mitochondrion matrix. The catalysed reaction is N(6)-[(R)-lipoyl]-L-lysyl-[protein] + pyruvate + H(+) = N(6)-[(R)-S(8)-acetyldihydrolipoyl]-L-lysyl-[protein] + CO2. Functionally, the pyruvate dehydrogenase complex catalyzes the overall conversion of pyruvate to acetyl-CoA and CO(2). It contains multiple copies of three enzymatic components: pyruvate dehydrogenase (E1), dihydrolipoamide acetyltransferase (E2) and lipoamide dehydrogenase (E3). This Dictyostelium discoideum (Social amoeba) protein is Pyruvate dehydrogenase E1 component subunit beta, mitochondrial (pdhB).